Reading from the N-terminus, the 335-residue chain is Anthranilate phosphoribosyltransferase (335 aa).

Residues glycine 79, 82–83, serine 87, 89–92, 107–115, and serine 119 each bind 5-phospho-alpha-D-ribose 1-diphosphate; these read GD, NIST, and KHGNRSITS. Glycine 79 is an anthranilate binding site. Residue serine 91 participates in Mg(2+) binding. Asparagine 110 contributes to the anthranilate binding site. Arginine 165 provides a ligand contact to anthranilate. Mg(2+)-binding residues include aspartate 224 and glutamate 225.

This sequence belongs to the anthranilate phosphoribosyltransferase family. As to quaternary structure, homodimer. Mg(2+) serves as cofactor.

The catalysed reaction is N-(5-phospho-beta-D-ribosyl)anthranilate + diphosphate = 5-phospho-alpha-D-ribose 1-diphosphate + anthranilate. It participates in amino-acid biosynthesis; L-tryptophan biosynthesis; L-tryptophan from chorismate: step 2/5. Functionally, catalyzes the transfer of the phosphoribosyl group of 5-phosphorylribose-1-pyrophosphate (PRPP) to anthranilate to yield N-(5'-phosphoribosyl)-anthranilate (PRA). This Lactococcus lactis subsp. cremoris (strain MG1363) protein is Anthranilate phosphoribosyltransferase.